The chain runs to 324 residues: Acetyl-coenzyme A carboxylase carboxyl transferase subunit alpha (324 aa).

Residues 37–291 (ILEDKLENLE…NVVLQKTFEQ (255 aa)) form the CoA carboxyltransferase C-terminal domain.

It belongs to the AccA family. In terms of assembly, acetyl-CoA carboxylase is a heterohexamer composed of biotin carboxyl carrier protein (AccB), biotin carboxylase (AccC) and two subunits each of ACCase subunit alpha (AccA) and ACCase subunit beta (AccD).

The protein resides in the cytoplasm. It catalyses the reaction N(6)-carboxybiotinyl-L-lysyl-[protein] + acetyl-CoA = N(6)-biotinyl-L-lysyl-[protein] + malonyl-CoA. Its pathway is lipid metabolism; malonyl-CoA biosynthesis; malonyl-CoA from acetyl-CoA: step 1/1. In terms of biological role, component of the acetyl coenzyme A carboxylase (ACC) complex. First, biotin carboxylase catalyzes the carboxylation of biotin on its carrier protein (BCCP) and then the CO(2) group is transferred by the carboxyltransferase to acetyl-CoA to form malonyl-CoA. This Bacillus cytotoxicus (strain DSM 22905 / CIP 110041 / 391-98 / NVH 391-98) protein is Acetyl-coenzyme A carboxylase carboxyl transferase subunit alpha.